A 270-amino-acid polypeptide reads, in one-letter code: Formamidopyrimidine-DNA glycosylase (270 aa).

Proline 2 functions as the Schiff-base intermediate with DNA in the catalytic mechanism. The active-site Proton donor is the glutamate 3. Lysine 58 acts as the Proton donor; for beta-elimination activity in catalysis. The DNA site is built by histidine 91, arginine 110, and lysine 151. Residues 236–270 form an FPG-type zinc finger; sequence FAYGRGGQPCKVCGTTLREIKLGQRASVYCPKCQR. Arginine 260 functions as the Proton donor; for delta-elimination activity in the catalytic mechanism.

The protein belongs to the FPG family. In terms of assembly, monomer. Zn(2+) serves as cofactor.

The catalysed reaction is Hydrolysis of DNA containing ring-opened 7-methylguanine residues, releasing 2,6-diamino-4-hydroxy-5-(N-methyl)formamidopyrimidine.. It catalyses the reaction 2'-deoxyribonucleotide-(2'-deoxyribose 5'-phosphate)-2'-deoxyribonucleotide-DNA = a 3'-end 2'-deoxyribonucleotide-(2,3-dehydro-2,3-deoxyribose 5'-phosphate)-DNA + a 5'-end 5'-phospho-2'-deoxyribonucleoside-DNA + H(+). Involved in base excision repair of DNA damaged by oxidation or by mutagenic agents. Acts as a DNA glycosylase that recognizes and removes damaged bases. Has a preference for oxidized purines, such as 7,8-dihydro-8-oxoguanine (8-oxoG). Has AP (apurinic/apyrimidinic) lyase activity and introduces nicks in the DNA strand. Cleaves the DNA backbone by beta-delta elimination to generate a single-strand break at the site of the removed base with both 3'- and 5'-phosphates. This is Formamidopyrimidine-DNA glycosylase from Pseudomonas syringae pv. tomato (strain ATCC BAA-871 / DC3000).